The chain runs to 565 residues: Phospholipase B-like protein C (565 aa).

Residues 1 to 21 (MNKIIILISLFLNFLFGYVVC) form the signal peptide. Residues asparagine 53, asparagine 84, asparagine 118, asparagine 200, asparagine 201, asparagine 211, asparagine 266, asparagine 302, asparagine 406, and asparagine 485 are each glycosylated (N-linked (GlcNAc...) asparagine).

Belongs to the phospholipase B-like family.

The protein resides in the secreted. Its function is as follows. Probable phospholipase. The chain is Phospholipase B-like protein C (plbC) from Dictyostelium discoideum (Social amoeba).